A 125-amino-acid polypeptide reads, in one-letter code: Small ribosomal subunit protein eS8 (125 aa).

A disordered region spans residues 1–34 (MQWQGRSVRKSTGGRYSPSRGKRRREIGSAPAET).

Belongs to the eukaryotic ribosomal protein eS8 family. As to quaternary structure, part of the 30S ribosomal subunit.

The sequence is that of Small ribosomal subunit protein eS8 from Methanospirillum hungatei JF-1 (strain ATCC 27890 / DSM 864 / NBRC 100397 / JF-1).